The chain runs to 239 residues: Ribonuclease 3 (239 aa).

Residues 12–137 (ISRLEALIGY…LIATLYLDGG (126 aa)) enclose the RNase III domain. Mg(2+) is bound at residue glutamate 50. Residue aspartate 54 is part of the active site. Mg(2+)-binding residues include aspartate 123 and glutamate 126. Glutamate 126 is a catalytic residue. Residues 162–231 (DAKTELQEWA…ATRLLEREGV (70 aa)) form the DRBM domain.

The protein belongs to the ribonuclease III family. As to quaternary structure, homodimer. Mg(2+) serves as cofactor.

The protein localises to the cytoplasm. It carries out the reaction Endonucleolytic cleavage to 5'-phosphomonoester.. Its function is as follows. Digests double-stranded RNA. Involved in the processing of primary rRNA transcript to yield the immediate precursors to the large and small rRNAs (23S and 16S). Processes some mRNAs, and tRNAs when they are encoded in the rRNA operon. Processes pre-crRNA and tracrRNA of type II CRISPR loci if present in the organism. The sequence is that of Ribonuclease 3 from Agrobacterium fabrum (strain C58 / ATCC 33970) (Agrobacterium tumefaciens (strain C58)).